The following is a 138-amino-acid chain: Urease subunit beta (138 aa).

The disordered stretch occupies residues 115-138 (RMRAAGFGDTGEAAPDDGDTESDQ). Residues 128-138 (APDDGDTESDQ) are compositionally biased toward acidic residues.

Belongs to the urease beta subunit family. In terms of assembly, heterotrimer of UreA (gamma), UreB (beta) and UreC (alpha) subunits. Three heterotrimers associate to form the active enzyme.

Its subcellular location is the cytoplasm. The enzyme catalyses urea + 2 H2O + H(+) = hydrogencarbonate + 2 NH4(+). It participates in nitrogen metabolism; urea degradation; CO(2) and NH(3) from urea (urease route): step 1/1. The sequence is that of Urease subunit beta from Haloarcula marismortui (strain ATCC 43049 / DSM 3752 / JCM 8966 / VKM B-1809) (Halobacterium marismortui).